Reading from the N-terminus, the 1214-residue chain is SWI/SNF complex subunit SMARCC2 (1214 aa).

The marR-like, BRCT and chromo domains module stretch occupies residues 1–274; that stretch reads MAVRKKDGGP…PVSRRKKISA (274 aa). Residues 10 to 136 form the MarR-like domain; it reads PNVKYYEAAD…IEKSLVQNNC (127 aa). The 44-residue stretch at 140-183 folds into the BRCT; N-terminus domain; that stretch reads PNIFLCPEIEPKLLGKLKDIIKRHQGTVTEDKNNASHVVYPVPG. The Chromo domain occupies 189 to 217; it reads EWVRPVMKRDKQVLLHWGYYPDSYDTWIP. Residues 233–257 form the BRCT; C-terminus domain; the sequence is KPRKVHAKWILDTDTFNEWMNEEDY. The segment at 257-413 is disordered; it reads YEVNDDKNPV…GEQTKNPDLH (157 aa). Polar residues predominate over residues 275–284; it reads KTLTDEVNSP. Phosphoserine is present on residues Ser283, Ser286, Ser302, Ser304, and Ser306. N6-(ADP-ribosyl)lysine is present on Lys312. An N6-acetyllysine modification is found at Lys326. Residues 331 to 344 show a composition bias toward basic and acidic residues; it reads HREEEQEDLTKDMD. Ser347 and Ser387 each carry phosphoserine. Over residues 379–398 the composition is skewed to acidic residues; the sequence is DLDEQEDESMETTGKDEDEN. Positions 424–521 constitute an SWIRM domain; that stretch reads IIIPSYAAWF…YQVDAESRPT (98 aa). Thr548 carries the phosphothreonine modification. Glycyl lysine isopeptide (Lys-Gly) (interchain with G-Cter in SUMO2) cross-links involve residues Lys564, Lys566, Lys568, and Lys592. The SANT domain maps to 596-647; the sequence is SATREWTEQETLLLLEALEMYKDDWNKVSEHVGSRTQDECILHFLRLPIEDP. Lys704 is covalently cross-linked (Glycyl lysine isopeptide (Lys-Gly) (interchain with G-Cter in SUMO2)). The tract at residues 724 to 852 is disordered; that stretch reads KVTGKADPAF…GERKTKVERD (129 aa). Basic and acidic residues-rich tracts occupy residues 747-777 and 784-852; these read EPERIEESGNDEARVEGQATDEKKEPKEPRE and EEAK…VERD. A Glycyl lysine isopeptide (Lys-Gly) (interchain with G-Cter in SUMO2) cross-link involves residue Lys787. Ser813 is subject to Phosphoserine. Lys848 participates in a covalent cross-link: Glycyl lysine isopeptide (Lys-Gly) (interchain with G-Cter in SUMO2). Positions 907–934 form a coiled coil; that stretch reads EELETIMDREREALEYQRQQLLADRQAF. Disordered stretches follow at residues 947-983, 997-1092, and 1182-1214; these read RQQHFQQMHQQQQQPPPALPPGSQPIPPTGAAGPPAV, PAGS…PPPP, and LPSASPLPDPGTPLPPDPTAPSPGTVTPVPPPQ. Positions 949 to 959 are enriched in low complexity; the sequence is QHFQQMHQQQQ. Pro residues predominate over residues 960–974; that stretch reads QPPPALPPGSQPIPP. Residues 997–1033 are compositionally biased toward low complexity; it reads PAGSGAPPGSLGPSEQIGQAGSTAGPQQQQPAGAPQP. Pro residues-rich tracts occupy residues 1034–1051 and 1186–1202; these read GAVPPGVPPPGPHGPSPF and SPLPDPGTPLPPDPTAP.

This sequence belongs to the SMARCC family. In terms of assembly, component of the multiprotein chromatin-remodeling complexes SWI/SNF: SWI/SNF-A (BAF), SWI/SNF-B (PBAF) and related complexes. The canonical complex contains a catalytic subunit (either SMARCA4/BRG1/BAF190A or SMARCA2/BRM/BAF190B) and at least SMARCE1, ACTL6A/BAF53, SMARCC1/BAF155, SMARCC2/BAF170, and SMARCB1/SNF5/BAF47. Other subunits specific to each of the complexes may also be present permitting several possible combinations developmentally and tissue specific. Component of the BAF complex, which includes at least actin (ACTB), ARID1A/BAF250A, ARID1B/BAF250B, SMARCA2/BRM, SMARCA4/BRG1, ACTL6A/BAF53, ACTL6B/BAF53B, SMARCE1/BAF57, SMARCC1/BAF155, SMARCC2/BAF170, SMARCB1/SNF5/INI1, and one or more SMARCD1/BAF60A, SMARCD2/BAF60B, or SMARCD3/BAF60C. In muscle cells, the BAF complex also contains DPF3. Component of neural progenitors-specific chromatin remodeling complex (npBAF complex) composed of at least, ARID1A/BAF250A or ARID1B/BAF250B, SMARCD1/BAF60A, SMARCD3/BAF60C, SMARCA2/BRM/BAF190B, SMARCA4/BRG1/BAF190A, SMARCB1/BAF47, SMARCC1/BAF155, SMARCE1/BAF57, SMARCC2/BAF170, PHF10/BAF45A, ACTL6A/BAF53A and actin. Component of neuron-specific chromatin remodeling complex (nBAF complex) composed of at least, ARID1A/BAF250A or ARID1B/BAF250B, SMARCD1/BAF60A, SMARCD3/BAF60C, SMARCA2/BRM/BAF190B, SMARCA4/BRG1/BAF190A, SMARCB1/BAF47, SMARCC1/BAF155, SMARCE1/BAF57, SMARCC2/BAF170, DPF1/BAF45B, DPF3/BAF45C, ACTL6B/BAF53B and actin. Component of the SWI/SNF-B (PBAF) chromatin remodeling complex, at least composed of SMARCA4/BRG1, SMARCB1/BAF47/SNF5, ACTL6A/BAF53A or ACTL6B/BAF53B, SMARCE1/BAF57, SMARCD1/BAF60A, SMARCD2/BAF60B, perhaps SMARCD3/BAF60C, SMARCC1/BAF155, SMARCC2/BAF170, PBRM1/BAF180, ARID2/BAF200 and actin. May also interact with the SIN3A histone deacetylase transcription repressor complex in conjunction with SMARCA2 and SMARCA4. Interacts with SMARD1. Interacts with KDM6B. Interaction with RCOR1. Interacts with DPF2. Interacts with ERCC6. Interacts with FOS. Mono-ADP-ribosylation at Lys-312 by SIRT6 promotes recruitment to the enhancer region of the Heme oxygenase-1 (HO-1) locus, leading to transcription activation of the locus. In terms of tissue distribution, ubiquitously expressed.

Its subcellular location is the nucleus. Its function is as follows. Involved in transcriptional activation and repression of select genes by chromatin remodeling (alteration of DNA-nucleosome topology). Component of SWI/SNF chromatin remodeling complexes that carry out key enzymatic activities, changing chromatin structure by altering DNA-histone contacts within a nucleosome in an ATP-dependent manner. Can stimulate the ATPase activity of the catalytic subunit of these complexes. May be required for CoREST dependent repression of neuronal specific gene promoters in non-neuronal cells. Belongs to the neural progenitors-specific chromatin remodeling complex (npBAF complex) and the neuron-specific chromatin remodeling complex (nBAF complex). During neural development a switch from a stem/progenitor to a postmitotic chromatin remodeling mechanism occurs as neurons exit the cell cycle and become committed to their adult state. The transition from proliferating neural stem/progenitor cells to postmitotic neurons requires a switch in subunit composition of the npBAF and nBAF complexes. As neural progenitors exit mitosis and differentiate into neurons, npBAF complexes which contain ACTL6A/BAF53A and PHF10/BAF45A, are exchanged for homologous alternative ACTL6B/BAF53B and DPF1/BAF45B or DPF3/BAF45C subunits in neuron-specific complexes (nBAF). The npBAF complex is essential for the self-renewal/proliferative capacity of the multipotent neural stem cells. The nBAF complex along with CREST plays a role regulating the activity of genes essential for dendrite growth. Critical regulator of myeloid differentiation, controlling granulocytopoiesis and the expression of genes involved in neutrophil granule formation. The polypeptide is SWI/SNF complex subunit SMARCC2 (SMARCC2) (Homo sapiens (Human)).